The primary structure comprises 323 residues: tRNA U34 carboxymethyltransferase (323 aa).

Residues Lys91, Trp105, Lys110, Gly130, 152–154 (DPT), 181–182 (IE), Met196, Tyr200, and Arg315 contribute to the carboxy-S-adenosyl-L-methionine site.

The protein belongs to the class I-like SAM-binding methyltransferase superfamily. CmoB family. As to quaternary structure, homotetramer.

The enzyme catalyses carboxy-S-adenosyl-L-methionine + 5-hydroxyuridine(34) in tRNA = 5-carboxymethoxyuridine(34) in tRNA + S-adenosyl-L-homocysteine + H(+). In terms of biological role, catalyzes carboxymethyl transfer from carboxy-S-adenosyl-L-methionine (Cx-SAM) to 5-hydroxyuridine (ho5U) to form 5-carboxymethoxyuridine (cmo5U) at position 34 in tRNAs. The chain is tRNA U34 carboxymethyltransferase from Salmonella agona (strain SL483).